A 377-amino-acid chain; its full sequence is 5-hydroxytryptamine receptor 1D (377 aa).

N-linked (GlcNAc...) asparagine glycans are attached at residues Asn-5, Asn-17, and Asn-21. A run of 3 helical transmembrane segments spans residues 39–64 (ISLALLLSIITMATALSNAFVLTTIF), 76–97 (LIGSLAMTDLLVSILVMPISIA), and 110–134 (LCDIWLSSDITCCTASILHLCVIAL). Cysteines 111 and 188 form a disulfide. The serotonin site is built by Asp-118 and Cys-122. The short motif at 135–137 (DRY) is the DRY motif; important for ligand-induced conformation changes element. Helical transmembrane passes span 155–176 (AAVMIATVWVISICISIPPLFW), 195–218 (ISYTIYSTCGAFYIPSVLLIILYG), 301–326 (KTLGIILGAFIVCWLPFFVASLVLPI), and 336–359 (ALFDFFTWLGYLNSLINPIIYTVF). Position 321 (Ser-321) interacts with serotonin. Residues 352-356 (NPIIY) carry the NPxxY motif; important for ligand-induced conformation changes and signaling motif.

It belongs to the G-protein coupled receptor 1 family. Homodimer. Heterodimer with HTR1B.

The protein resides in the cell membrane. In terms of biological role, G-protein coupled receptor for 5-hydroxytryptamine (serotonin). Also functions as a receptor for ergot alkaloid derivatives, various anxiolytic and antidepressant drugs and other psychoactive substances. Ligand binding causes a conformation change that triggers signaling via guanine nucleotide-binding proteins (G proteins) and modulates the activity of downstream effectors, such as adenylate cyclase. HTR1D is coupled to G(i)/G(o) G alpha proteins and mediates inhibitory neurotransmission by inhibiting adenylate cyclase activity. Regulates the release of 5-hydroxytryptamine in the brain, and thereby affects neural activity. May also play a role in regulating the release of other neurotransmitters. May play a role in vasoconstriction. The chain is 5-hydroxytryptamine receptor 1D (HTR1D) from Canis lupus familiaris (Dog).